We begin with the raw amino-acid sequence, 347 residues long: MDAFFSTYVWPTAIMIGQSLLLLVALLLFIAYVLLADRKIWAAVQLRRGPNVVGPFGLFQSFADLLKFVFKEPVIPAGANKTIFLLAPLVSVTLALAAWAVIPLNANWVIANINVGILFVFAISSLEVYGIIMGGWASNSKYPFLGALRSAAQMVSYEVSIGFVIVTVLLCVGSLNLTDIVNAQNDGLGTMLGLPASFLDWHWLSLFPMFIIFFISALAETNRPPFDLPEAESELVAGFMVEYGSTPYMMFMLGEYAAICLMCALTTILFLGGWLPPVDIWLLNWVPGIIWFVLKASLVFFMFAMVKAFVPRYRYDQLMRLGWKVFLPLSLAMVVIVAFVLKLTGWA.

Transmembrane regions (helical) follow at residues 14–34, 50–70, 83–103, 115–135, 161–181, 198–218, 258–278, 286–306, and 321–341; these read IMIGQSLLLLVALLLFIAYVL, PNVVGPFGLFQSFADLLKFVF, IFLLAPLVSVTLALAAWAVIP, VGILFVFAISSLEVYGIIMGG, IGFVIVTVLLCVGSLNLTDIV, FLDWHWLSLFPMFIIFFISAL, AICLMCALTTILFLGGWLPPV, VPGIIWFVLKASLVFFMFAMV, and LGWKVFLPLSLAMVVIVAFVL.

The protein belongs to the complex I subunit 1 family. As to quaternary structure, NDH-1 is composed of 14 different subunits. Subunits NuoA, H, J, K, L, M, N constitute the membrane sector of the complex.

It is found in the cell inner membrane. The enzyme catalyses a quinone + NADH + 5 H(+)(in) = a quinol + NAD(+) + 4 H(+)(out). Functionally, NDH-1 shuttles electrons from NADH, via FMN and iron-sulfur (Fe-S) centers, to quinones in the respiratory chain. The immediate electron acceptor for the enzyme in this species is believed to be ubiquinone. Couples the redox reaction to proton translocation (for every two electrons transferred, four hydrogen ions are translocated across the cytoplasmic membrane), and thus conserves the redox energy in a proton gradient. This subunit may bind ubiquinone. The polypeptide is NADH-quinone oxidoreductase subunit H 1 (Rhizobium meliloti (strain 1021) (Ensifer meliloti)).